The sequence spans 309 residues: MKIGLVKTNFPGERRVPLLPKDIKDFKNEILVEEGFGKFLDIDDQEYIDKGCHILSRAEVFSESEAIFSLKLIQPTDYPYLREGQMIIGWTHPFGSGRLFMKEQALPKKLIVVDLDSNSPCIYYENEIFESGIPKGLLYKNSFYAGYAGVLDALLQYGFIPTEETKIAILGSGNVAQGAFSSISKYSSNIRMYYRKTMSIFKENYTKYDIIINGIEIGKEDDPILSFSEQKSLKKGTFIIDVAADAGNTIEGTHFTSMDDPIYENDGKYYYVVPNTPSLIYRNVSQDLSKILSENIFSEDCSRFLSIKS.

Residues Arg-15, Lys-71, and His-92 each coordinate pyruvate. Position 171–176 (171–176 (GSGNVA)) interacts with NADP(+).

It belongs to the AlaDH/PNT family. CEOS subfamily. As to quaternary structure, homotetramer.

It carries out the reaction N(5)-[1(S)-1-carboxyethyl]-L-ornithine + NADP(+) + H2O = L-ornithine + pyruvate + NADPH + H(+). Functionally, catalyzes the NADPH-dependent reductive condensation between pyruvic acid and the side chain amino group of L-ornithine to form N(5)-(L-1-carboxyethyl)-L-ornithine. To a lesser extent, can also use L-lysine as substrate (yielding N(6)-(L-1-carboxyethyl)-L-lysine). The sequence is that of N(5)-(carboxyethyl)ornithine synthase (ceo) from Lactococcus lactis subsp. lactis (strain IL1403) (Streptococcus lactis).